The sequence spans 60 residues: Homeobox protein engrailed-like A (60 aa).

Positions 1–41 (ADQLARLRAEFQANRYLTEERRQNLARELSLNEAQIKIWFQ) form a DNA-binding region, homeobox.

The protein belongs to the engrailed homeobox family.

Its subcellular location is the nucleus. The polypeptide is Homeobox protein engrailed-like A (Myxine glutinosa (Atlantic hagfish)).